An 848-amino-acid polypeptide reads, in one-letter code: Trimethylamine-N-oxide reductase 1 (848 aa).

A signal peptide (tat-type signal) is located at residues 1-39; the sequence is MNNNDLFQASRRRFLAQLGGLTVAGMLGTSLLTPRRATA. Residue Ser-191 participates in Mo-bis(molybdopterin guanine dinucleotide) binding.

It belongs to the prokaryotic molybdopterin-containing oxidoreductase family. Mo-bis(molybdopterin guanine dinucleotide) serves as cofactor. Predicted to be exported by the Tat system. The position of the signal peptide cleavage has not been experimentally proven.

The protein localises to the periplasm. The catalysed reaction is trimethylamine + 2 Fe(III)-[cytochrome c] + H2O = trimethylamine N-oxide + 2 Fe(II)-[cytochrome c] + 3 H(+). Reduces trimethylamine-N-oxide (TMAO) into trimethylamine; an anaerobic reaction coupled to energy-yielding reactions. This Escherichia coli O6:H1 (strain CFT073 / ATCC 700928 / UPEC) protein is Trimethylamine-N-oxide reductase 1 (torA).